The chain runs to 355 residues: D-alanine--D-alanine ligase (355 aa).

The 208-residue stretch at 143-350 (KKIFSHLEIP…IDQLVAKLVD (208 aa)) folds into the ATP-grasp domain. An ATP-binding site is contributed by 178–233 (IEKLKLPVFVKPANSGSSLGISKAKTRSEIIKALQKAWEIDSRIVIEEGLDVRELE). Mg(2+) contacts are provided by Asp-303, Glu-317, and Asn-319.

This sequence belongs to the D-alanine--D-alanine ligase family. Mg(2+) serves as cofactor. Mn(2+) is required as a cofactor.

It localises to the cytoplasm. The catalysed reaction is 2 D-alanine + ATP = D-alanyl-D-alanine + ADP + phosphate + H(+). Its pathway is cell wall biogenesis; peptidoglycan biosynthesis. Functionally, cell wall formation. In Prochlorococcus marinus subsp. pastoris (strain CCMP1986 / NIES-2087 / MED4), this protein is D-alanine--D-alanine ligase.